Reading from the N-terminus, the 362-residue chain is MAEVPPGPSSLLPPPAPPAPAAVEPRCPFPAGAALACCSEDEEDDEEHEGGGSRSPAGGESATVAAKGHPCLRCPQPPQEQQQLNGLISPELRHLRAAASLKSKVLSVAEVAATTATPDGGPRATATKGAGVHSGERPPHSLSSNARTAVPSPVEAAAASDPAAARNGLAEGTEQEEEEEDEQVRLLSSSLTADCSLRSPSGREVEPGEDRTIRYVRYESELQMPDIMRLITKDLSEPYSIYTYRYFIHNWPQLCFLAMVGEECVGAIVCKLDMHKKMFRRGYIAMLAVDSKYRRNGIGTNLVKKAIYAMVEGDCDEVVLETEITNKSALKLYENLGFVRDKRLFRYYLNGVDALRLKLWLR.

Residues 1–20 (MAEVPPGPSSLLPPPAPPAP) show a composition bias toward pro residues. Disordered regions lie at residues 1–26 (MAEV…VEPR), 38–88 (CSED…NGLI), and 113–182 (ATTA…EEDE). Ser-39 and Ser-55 each carry phosphoserine. The span at 39–48 (SEDEEDDEEH) shows a compositional bias: acidic residues. Position 117 is a phosphothreonine (Thr-117). Low complexity predominate over residues 149-165 (AVPSPVEAAAASDPAAA). A Phosphoserine modification is found at Ser-152. Acidic residues predominate over residues 173-182 (TEQEEEEEDE). Residues Ser-190, Ser-196, and Ser-199 each carry the phosphoserine modification. In terms of domain architecture, N-acetyltransferase spans 214–362 (RYVRYESELQ…DALRLKLWLR (149 aa)). The residue at position 233 (Lys-233) is an N6-acetyllysine.

It belongs to the acetyltransferase family. MAK3 subfamily. Component of the N-terminal acetyltransferase C (NatC) complex, which is composed of NAA35, NAA38 and NAA30.

It localises to the cytoplasm. The protein resides in the nucleus. The catalysed reaction is N-terminal L-methionyl-L-leucyl-[protein] + acetyl-CoA = N-terminal N(alpha)-acetyl-L-methionyl-L-leucyl-[protein] + CoA + H(+). The enzyme catalyses N-terminal L-methionyl-L-isoleucyl-[protein] + acetyl-CoA = N-terminal N(alpha)-acetyl-L-methionyl-L-isoleucyl-[protein] + CoA + H(+). It catalyses the reaction N-terminal L-methionyl-L-phenylalanyl-[protein] + acetyl-CoA = N-terminal N(alpha)-acetyl-L-methionyl-L-phenylalanyl-[protein] + CoA + H(+). It carries out the reaction N-terminal L-methionyl-L-tryptophyl-[protein] + acetyl-CoA = N-terminal N(alpha)-acetyl-L-methionyl-L-tryptophyl-[protein] + CoA + H(+). The catalysed reaction is N-terminal L-methionyl-L-tyrosyl-[protein] + acetyl-CoA = N-terminal N(alpha)-acetyl-L-methionyl-L-tyrosyl-[protein] + CoA + H(+). In terms of biological role, catalytic subunit of the N-terminal acetyltransferase C (NatC) complex. Catalyzes acetylation of the N-terminal methionine residues of peptides beginning with Met-Leu-Ala and Met-Leu-Gly. N-terminal acetylation protects proteins from ubiquitination and degradation by the N-end rule pathway. Necessary for the lysosomal localization and function of ARL8B sugeesting that ARL8B is a NatC substrate. In Homo sapiens (Human), this protein is N-alpha-acetyltransferase 30 (NAA30).